A 561-amino-acid polypeptide reads, in one-letter code: 7-keto 8-aminopelargonic acid transporter (561 aa).

Topologically, residues 1 to 49 are cytoplasmic; it reads MNRVGAVFLFVYERNFFLSIVPDRHRTEIRMSSSERSEVKFDKHFNWWS. The helical transmembrane segment at 50–70 threads the bilayer; that stretch reads LLGIAFSLSCSWVGISASMAV. At 71-77 the chain is on the extracellular side; it reads GIASGGP. A helical membrane pass occupies residues 78-98; that stretch reads LLIIYGLIIAAFFSLMCGISL. Topologically, residues 99 to 160 are cytoplasmic; sequence GDFAAILPNS…NVEVSSKFQK (62 aa). A helical transmembrane segment spans residues 161 to 181; it reads VSSMVVGLLNYFGAIFTTASI. The Extracellular portion of the chain corresponds to 182 to 204; that stretch reads CSSLSMSCIGIHKLLHPDYELKH. The helical transmembrane segment at 205-225 threads the bilayer; sequence WHVFVGYECINAVLTLFNIYS. Residues 226–230 are Cytoplasmic-facing; the sequence is TPLPY. Residues 231–251 traverse the membrane as a helical segment; that stretch reads ISQFGLYTSLLSFAMTFIICI. Topologically, residues 252-281 are extracellular; it reads VSRSDNTVDPWPKASNIFGSFDNQTGWNSS. A helical membrane pass occupies residues 282–302; it reads GMAFVVGLVNPIWAFVGIDSA. Residues 303–321 lie on the Cytoplasmic side of the membrane; it reads THMIDEVGYSKSRFLVPKV. A helical membrane pass occupies residues 322–342; the sequence is IITTIIVGFVTSFIYCVGLFF. Topologically, residues 343-369 are extracellular; it reads CITDQTAVVESILPIVEIFYQATGNRN. Residues 370–390 form a helical membrane-spanning segment; that stretch reads LSVFLQCMCITTGFVSGIASG. The Cytoplasmic segment spans residues 391–439; the sequence is TWQSRILQSFGKSYAPFYKEGSLGNKSLKKLAVLTPGFKSPLYAHFLSQ. Residues 440-460 form a helical membrane-spanning segment; the sequence is ICVTIIGCIFMGSSTAFNAII. A topological domain (extracellular) is located at residue T461. The helical transmembrane segment at 462-482 threads the bilayer; sequence ACITLLLMSYAVPSFIFLFVI. The Cytoplasmic segment spans residues 483–507; it reads KKEKFIHRIESDVNCVSRPNRRRMS. A helical transmembrane segment spans residues 508-528; the sequence is MIPHIICILWTLFCLVFLSFP. The Extracellular segment spans residues 529 to 540; the sequence is YTLPVTAGNMNY. A helical membrane pass occupies residues 541–560; it reads TSVVYAVVFCIISIVVFPTC. I561 is a topological domain (cytoplasmic).

It belongs to the amino acid-polyamine-organocation (APC) superfamily.

The protein resides in the membrane. In terms of biological role, transport into the cell of 7-keto 8-aminopelargonic acid. The polypeptide is 7-keto 8-aminopelargonic acid transporter (BIO5) (Saccharomyces cerevisiae (strain ATCC 204508 / S288c) (Baker's yeast)).